The chain runs to 390 residues: Protein PIN-LIKES 3 (390 aa).

Over 1-14 (MVKLLELFITSSKP) the chain is Lumenal. A helical membrane pass occupies residues 15–35 (VVEILLITSVGFYMALDGVNL). The Cytoplasmic segment spans residues 36-43 (LGHDARKY). Residues 44–61 (LNNIVFYVFSPSLIGSRL) traverse the membrane as a helical segment. The Lumenal segment spans residues 62-76 (ADSVTYESLVKMWFM). The chain crosses the membrane as a helical span at residues 77-97 (PVNVLLTFIIGSLLGWIVIVI). The Cytoplasmic segment spans residues 98–107 (TKPPSHLRGL). A helical membrane pass occupies residues 108 to 128 (ILGCCAAGNLGNMPLIIIPAV). Topologically, residues 129–144 (CKEKGGPFGDPESCQK) are lumenal. A helical membrane pass occupies residues 145–165 (YGMGYVALSMAMGSIYIWTYV). At 166–227 (YNLMRVLSNS…SLSQKVNLKT (62 aa)) the chain is on the cytoplasmic side. A helical transmembrane segment spans residues 228 to 248 (IFAPSTIAAMIALVIGLITPL). The Lumenal portion of the chain corresponds to 249–265 (RKLIIGTEAPLRVLQDS). The helical transmembrane segment at 266–286 (VTLVGDGAVPAMTMIIGGNLL) threads the bilayer. Over 287–297 (KGLRSSGMKMS) the chain is Cytoplasmic. The chain crosses the membrane as a helical span at residues 298-318 (SIIGVLVARYVLLPMSGVLIV). The Lumenal segment spans residues 319–331 (RGAYKLDLVTSEP). A helical transmembrane segment spans residues 332 to 352 (LYQFVLLLQYAVPPAMNLGTI). Topologically, residues 353–364 (TQLFGTGESECS) are cytoplasmic. Residues 365-385 (VIMLWTYSLASIALTVWPTFF) traverse the membrane as a helical segment. Topologically, residues 386–390 (MWLVA) are lumenal.

The protein belongs to the auxin efflux carrier (TC 2.A.69.2) family. Expressed in seedlings, rosette and cauline leaves, flowers and siliques.

Its subcellular location is the endoplasmic reticulum membrane. Involved in cellular auxin homeostasis by regulating auxin metabolism. Regulates intracellular auxin accumulation at the endoplasmic reticulum and thus auxin availability for nuclear auxin signaling. The protein is Protein PIN-LIKES 3 (PILS3) of Arabidopsis thaliana (Mouse-ear cress).